Here is a 414-residue protein sequence, read N- to C-terminus: Inositol-tetrakisphosphate 1-kinase (414 aa).

Lys-18 is a binding site for 1D-myo-inositol 1,3,4-trisphosphate. Residues Arg-106 and Lys-157 each coordinate ATP. The ATP-grasp domain occupies 117 to 325; it reads EAYMEDDRIC…IATVLQGQST (209 aa). The 1D-myo-inositol 1,3,4-trisphosphate site is built by His-167 and Lys-199. Residues 188–199, Ser-214, Ser-232, and Ser-236 contribute to the ATP site; that span reads QNFINHNAVLYK. Mg(2+) contacts are provided by Asp-281, Asp-295, and Asn-297. Asn-297 lines the 1D-myo-inositol 1,3,4-trisphosphate pocket. Residues Lys-340 and Lys-383 each carry the N6-acetyllysine; by EP300 and CREBBP modification. Ser-396 is subject to Phosphoserine. An N6-acetyllysine; by EP300 and CREBBP modification is found at Lys-410.

It belongs to the ITPK1 family. Monomer. Interacts with GPS1/COPS1. Mg(2+) serves as cofactor. In terms of processing, acetylation by EP300 and CREBBP destabilizes ITPK1, and down-regulates enzymatic activity. Deacetylated by SIRT1. As to expression, expressed in brain &gt; heart &gt; skeletal muscle = kidney = pancreas = liver = placenta &gt; lung. In brain, it is expressed in cerebellum, cerebral cortex, medulla, spinal cord, occipital lobe, frontal lobe, temporal lobe and putamen.

The enzyme catalyses 1D-myo-inositol 3,4,5,6-tetrakisphosphate + ATP = 1D-myo-inositol 1,3,4,5,6-pentakisphosphate + ADP + H(+). It carries out the reaction 1D-myo-inositol 1,3,4-trisphosphate + ATP = 1D-myo-inositol 1,3,4,5-tetrakisphosphate + ADP + H(+). The catalysed reaction is 1D-myo-inositol 1,3,4-trisphosphate + ATP = 1D-myo-inositol 1,3,4,6-tetrakisphosphate + ADP + H(+). It catalyses the reaction 1D-myo-inositol 3,4,6-trisphosphate + ATP = 1D-myo-inositol 1,3,4,6-tetrakisphosphate + ADP + H(+). The enzyme catalyses 1D-myo-inositol 1,3,4-trisphosphate + 1D-myo-inositol 1,3,4,5,6-pentakisphosphate = 1D-myo-inositol 3,4,5,6-tetrakisphosphate + 1D-myo-inositol 1,3,4,6-tetrakisphosphate. It carries out the reaction 1D-myo-inositol 1,3,4-trisphosphate + 1D-myo-inositol 1,3,4,5,6-pentakisphosphate = 1D-myo-inositol 3,4,5,6-tetrakisphosphate + 1D-myo-inositol 1,3,4,5-tetrakisphosphate. Functionally, kinase that can phosphorylate various inositol polyphosphate such as Ins(3,4,5,6)P4 or Ins(1,3,4)P3. Phosphorylates Ins(3,4,5,6)P4 at position 1 to form Ins(1,3,4,5,6)P5. This reaction is thought to have regulatory importance, since Ins(3,4,5,6)P4 is an inhibitor of plasma membrane Ca(2+)-activated Cl(-) channels, while Ins(1,3,4,5,6)P5 is not. Also phosphorylates Ins(1,3,4)P3 on O-5 and O-6 to form Ins(1,3,4,6)P4, an essential molecule in the hexakisphosphate (InsP6) pathway. Also acts as an inositol polyphosphate phosphatase that dephosphorylates Ins(1,3,4,5)P4 and Ins(1,3,4,6)P4 to Ins(1,3,4)P3, and Ins(1,3,4,5,6)P5 to Ins(3,4,5,6)P4. May also act as an isomerase that interconverts the inositol tetrakisphosphate isomers Ins(1,3,4,5)P4 and Ins(1,3,4,6)P4 in the presence of ADP and magnesium. Probably acts as the rate-limiting enzyme of the InsP6 pathway. Modifies TNF-alpha-induced apoptosis by interfering with the activation of TNFRSF1A-associated death domain. Plays an important role in MLKL-mediated necroptosis. Produces highly phosphorylated inositol phosphates such as inositolhexakisphosphate (InsP6) which bind to MLKL mediating the release of an N-terminal auto-inhibitory region leading to its activation. Essential for activated phospho-MLKL to oligomerize and localize to the cell membrane during necroptosis. In Homo sapiens (Human), this protein is Inositol-tetrakisphosphate 1-kinase.